The following is a 461-amino-acid chain: MELKGKKVLVVGLGKSGLAAALFLRRRGAQVTVSDIRSAEALSKDIPALIEQGIAVEAGGHGLLTFRRQDLIVVSPGVPLDTPELVQVRKFGLPIIGEVELAARFLKGKTLAITGSNGKTTTTSLCGAILERAHQHVQVGGNIGLPVIALVDDSRDDGWSVLEISSFQLETTERFRPGIAVILNITPDHLDRHGSFENYVAAKERIFAAQTHDDALILNADDDAASRAAARASSRIFWFSRNRVIRQGAFVHEGNILFRAAEDAATEPILPLSEIPLKGAHNVENVLAAVCAARLAGVSAEAIRDAVRDFRAVEHRLEFVAEIGGVSFYNDSKATNVDAARKAIEAFPGGIHLILGGKDKNSDYRTLRPLMAGRVKAVYTIGSAAEKIMTHLDGAVPLIAAGTLDLAVNLAGGAASPGDVVLLAPACSSFDQFENYEQRGQVFKDLVLAHRGAAAWQNASA.

Position 115-121 (115-121 (GSNGKTT)) interacts with ATP.

Belongs to the MurCDEF family.

It localises to the cytoplasm. The catalysed reaction is UDP-N-acetyl-alpha-D-muramoyl-L-alanine + D-glutamate + ATP = UDP-N-acetyl-alpha-D-muramoyl-L-alanyl-D-glutamate + ADP + phosphate + H(+). The protein operates within cell wall biogenesis; peptidoglycan biosynthesis. In terms of biological role, cell wall formation. Catalyzes the addition of glutamate to the nucleotide precursor UDP-N-acetylmuramoyl-L-alanine (UMA). This Acidobacterium capsulatum (strain ATCC 51196 / DSM 11244 / BCRC 80197 / JCM 7670 / NBRC 15755 / NCIMB 13165 / 161) protein is UDP-N-acetylmuramoylalanine--D-glutamate ligase.